Consider the following 262-residue polypeptide: Hydroxyethylthiazole kinase (262 aa).

M43 contacts substrate. 2 residues coordinate ATP: R118 and T164. A191 serves as a coordination point for substrate.

It belongs to the Thz kinase family. Requires Mg(2+) as cofactor.

It catalyses the reaction 5-(2-hydroxyethyl)-4-methylthiazole + ATP = 4-methyl-5-(2-phosphooxyethyl)-thiazole + ADP + H(+). Its pathway is cofactor biosynthesis; thiamine diphosphate biosynthesis; 4-methyl-5-(2-phosphoethyl)-thiazole from 5-(2-hydroxyethyl)-4-methylthiazole: step 1/1. Catalyzes the phosphorylation of the hydroxyl group of 4-methyl-5-beta-hydroxyethylthiazole (THZ). In Cereibacter sphaeroides (strain ATCC 17023 / DSM 158 / JCM 6121 / CCUG 31486 / LMG 2827 / NBRC 12203 / NCIMB 8253 / ATH 2.4.1.) (Rhodobacter sphaeroides), this protein is Hydroxyethylthiazole kinase.